A 198-amino-acid polypeptide reads, in one-letter code: MALGARRVAGVDEVGRGPLAGPVTAAAVVLDPANIPEGLNDSKQLSVKRRNLLGDALASSADISVGHASVEEIEQHNILRASHMAMLRALAGLRLRPDFVLIDGAMVPQGLNLRAQPVVKGDTRCLSISAASIIAKIARDKIMVDLAQQHPGYGWETNMGYGSKSHISALRNLGVTPHHRRTFKPVHHMLYQDKNVKP.

An RNase H type-2 domain is found at 6-195; sequence RRVAGVDEVG…VHHMLYQDKN (190 aa). 3 residues coordinate a divalent metal cation: aspartate 12, glutamate 13, and aspartate 103.

The protein belongs to the RNase HII family. Requires Mn(2+) as cofactor. Mg(2+) is required as a cofactor.

The protein resides in the cytoplasm. The enzyme catalyses Endonucleolytic cleavage to 5'-phosphomonoester.. Its function is as follows. Endonuclease that specifically degrades the RNA of RNA-DNA hybrids. The protein is Ribonuclease HII of Roseobacter denitrificans (strain ATCC 33942 / OCh 114) (Erythrobacter sp. (strain OCh 114)).